Reading from the N-terminus, the 203-residue chain is Ribosomal RNA small subunit methyltransferase G (203 aa).

S-adenosyl-L-methionine is bound by residues Gly-73, Leu-78, 124 to 125 (VE), and Arg-139.

The protein belongs to the methyltransferase superfamily. RNA methyltransferase RsmG family.

Its subcellular location is the cytoplasm. The catalysed reaction is guanosine(527) in 16S rRNA + S-adenosyl-L-methionine = N(7)-methylguanosine(527) in 16S rRNA + S-adenosyl-L-homocysteine. Its function is as follows. Specifically methylates the N7 position of guanine in position 527 of 16S rRNA. This is Ribosomal RNA small subunit methyltransferase G from Haemophilus influenzae (strain 86-028NP).